Consider the following 600-residue polypeptide: Alpha-N-acetylgalactosaminide alpha-2,6-sialyltransferase 1 (600 aa).

Residues 1-14 (MRSCLWRCRHLSQG) lie on the Cytoplasmic side of the membrane. The chain crosses the membrane as a helical; Signal-anchor for type II membrane protein span at residues 15–35 (VQWSLLLAVLVFFLFALPSFI). Over 36-600 (KEPQTKPSRH…PGPGTAKAKN (565 aa)) the chain is Lumenal. 2 disordered regions span residues 38–191 (PQTK…AATT) and 208–248 (GAVS…TQRN). A compositionally biased stretch (basic and acidic residues) spans 46–55 (QRTENIKERS). 3 stretches are compositionally biased toward polar residues: residues 84 to 94 (NALNTQTQPKA), 151 to 179 (TEAQ…ASRT), and 209 to 219 (AVSTRTRQKGV). Disulfide bonds link Cys279–Cys362 and Cys365–Cys533. Asn300, Asn311, Asn331, Asn375, and Asn460 each carry an N-linked (GlcNAc...) asparagine glycan.

It belongs to the glycosyltransferase 29 family. In terms of processing, glycosylated; autosialylated. In terms of tissue distribution, expression is restricted to the gastrointestinal tract. Highly expressed in goblet cells. Also expressed in various tumor cells.

It is found in the golgi apparatus membrane. It carries out the reaction a beta-D-galactosyl-(1-&gt;3)-N-acetyl-alpha-D-galactosaminyl derivative + CMP-N-acetyl-beta-neuraminate = a beta-D-galactosyl-(1-&gt;3)-[N-acetyl-alpha-neuraminyl-(2-&gt;6)]-N-acetyl-alpha-D-galactosaminyl derivative + CMP + H(+). The catalysed reaction is a 3-O-[N-acetyl-alpha-D-galactosaminyl]-L-seryl-[protein] + CMP-N-acetyl-beta-neuraminate = a 3-O-[N-acetyl-alpha-neuraminosyl-(2-&gt;6)-N-acetyl-alpha-D-galactosaminyl]-L-seryl-[protein] + CMP + H(+). The enzyme catalyses a 3-O-[N-acetyl-alpha-D-galactosaminyl]-L-threonyl-[protein] + CMP-N-acetyl-beta-neuraminate = a 3-O-[N-acetyl-alpha-neuraminosyl-(2-&gt;6)-N-acetyl-alpha-D-galactosaminyl]-L-threonyl-[protein] + CMP + H(+). It catalyses the reaction a 3-O-[beta-D-galactosyl-(1-&gt;3)-N-acetyl-alpha-D-galactosaminyl]-L-seryl-[protein] + CMP-N-acetyl-beta-neuraminate = a 3-O-{beta-D-galactosyl-(1-&gt;3)-[N-acetyl-alpha-neuraminosyl-(2-&gt;6)]-N-acetyl-alpha-D-galactosaminyl}-L-seryl-[protein] + CMP + H(+). It carries out the reaction a 3-O-[beta-D-galactosyl-(1-&gt;3)-N-acetyl-alpha-D-galactosaminyl]-L-threonyl-[protein] + CMP-N-acetyl-beta-neuraminate = a 3-O-{beta-D-galactosyl-(1-&gt;3)-[N-acetyl-alpha-neuraminosyl-(2-&gt;6)]-N-acetyl-alpha-D-galactosaminyl}-L-threonyl-[protein] + CMP + H(+). The catalysed reaction is a 3-O-[N-acetyl-alpha-neuraminyl-(2-&gt;3)-beta-D-galactosyl-(1-&gt;3)-N-acetyl-alpha-D-galactosaminyl]-L-threonyl-[protein] + CMP-N-acetyl-beta-neuraminate = a 3-O-{alpha-Neu5Ac-(2-&gt;3)-beta-D-Gal-(1-&gt;3)-[alpha-Neu5Ac-(2-&gt;6)]-alpha-D-GalNAc}-L-threonyl-[protein] + CMP + H(+). It functions in the pathway protein modification; protein glycosylation. Functionally, protein sialyltransferase specifically expressed in goblet cells that plays a key role in intestinal host-commensal homeostasis. Conjugates sialic acid with an alpha-2-6 linkage to N-acetylgalactosamine (GalNAc) glycan chains linked to serine or threonine in glycoproteins. Catalyzes the formation of the sialyl-Tn (S-Tn) antigen, an antigen found in intestinal goblet cells, as well as ulcerative colitis (UC) and various cancers. Protein sialylation in globlet cells is essential for mucus integrity and is required to protect the intestinal mucus against excessive bacterial proteolytic degradation. This chain is Alpha-N-acetylgalactosaminide alpha-2,6-sialyltransferase 1, found in Homo sapiens (Human).